A 354-amino-acid polypeptide reads, in one-letter code: MNTASDIDYARYDHIRPILWTGEALQLLDQRKLPFVVEHVVCHDSDEVAASIHALTVRGAPAIGIAAAWGVVLAARDVQAADGAHALQQLEPALQRLNASRPTAVNLAWALARMRRCLSAAGADWKALLEAEAQAIAEEDLAANRHMGALGAGLIEAGSGVLTHCNTGSLATAGFGTALGVIRAGMAQHRIARVFAGETRPWLQGARLTVWELQQDGIDATLIADSAASHLMKTGAVQWVIVGADRICANGDTANKIGTYQLAIAARHHGVKFMVVAPSSTVDMETVDGSQIEIEQRDPGELYGVGGTRTVAEGIAAWNPVFDVTPGELIDAIVTERGVILNPTAGNMRAAFGG.

Substrate contacts are provided by residues 58-60, Arg101, and Gln204; that span reads RGA. The Proton donor role is filled by Asp245. 255-256 contacts substrate; that stretch reads NK.

Belongs to the eIF-2B alpha/beta/delta subunits family. MtnA subfamily.

The catalysed reaction is 5-(methylsulfanyl)-alpha-D-ribose 1-phosphate = 5-(methylsulfanyl)-D-ribulose 1-phosphate. It functions in the pathway amino-acid biosynthesis; L-methionine biosynthesis via salvage pathway; L-methionine from S-methyl-5-thio-alpha-D-ribose 1-phosphate: step 1/6. In terms of biological role, catalyzes the interconversion of methylthioribose-1-phosphate (MTR-1-P) into methylthioribulose-1-phosphate (MTRu-1-P). The polypeptide is Methylthioribose-1-phosphate isomerase (Stenotrophomonas maltophilia (strain R551-3)).